Here is a 446-residue protein sequence, read N- to C-terminus: D(1A) dopamine receptor (446 aa).

At M1 to R22 the chain is on the extracellular side. N-linked (GlcNAc...) asparagine glycosylation occurs at N4. A helical transmembrane segment spans residues I23–I48. The Cytoplasmic portion of the chain corresponds to R49–N59. The chain crosses the membrane as a helical span at residues F60–A86. The Extracellular portion of the chain corresponds to G87–C95. A disulfide bond links C95 and C186. A helical transmembrane segment spans residues N96 to V118. The Cytoplasmic portion of the chain corresponds to D119 to K137. Residues A138–W162 form a helical membrane-spanning segment. Residues H163–R192 lie on the Extracellular side of the membrane. The chain crosses the membrane as a helical span at residues T193–Y218. Over R219–K272 the chain is Cytoplasmic. Residues T273–G299 traverse the membrane as a helical segment. Residues S300–T312 lie on the Extracellular side of the membrane. Residues F313–F337 traverse the membrane as a helical segment. Over Q338–T446 the chain is Cytoplasmic. Residues C347 and C351 are each lipidated (S-palmitoyl cysteine).

The protein belongs to the G-protein coupled receptor 1 family. In terms of assembly, interacts with DNAJC14 via its C-terminus PubMed:11331877. Interacts with DRD2. Interacts with DORIP1. Post-translationally, N-glycosylated. Brain, in the striatum, the nucleus accumbens, and the olfactory tubercle.

Its subcellular location is the cell membrane. It is found in the endoplasmic reticulum membrane. The protein localises to the cell projection. It localises to the dendrite. The protein resides in the cilium membrane. Its subcellular location is the dendritic spine. Its function is as follows. Dopamine receptor whose activity is mediated by G proteins which activate adenylyl cyclase. This is D(1A) dopamine receptor (Drd1) from Rattus norvegicus (Rat).